Consider the following 927-residue polypeptide: Lysine-specific demethylase JMJ28 (927 aa).

One can recognise a WRC domain in the interval 7–52; the sequence is VPDEFRCNRSDGKQWRCKRRALEGKKMCESHHSQQSLKRSKQKVAE. The Nuclear localization signal 1 motif lies at 30-37; sequence GKKMCESH. Positions 30-92 are disordered; that stretch reads GKKMCESHHS…RLGKSKRKRV (63 aa). Positions 80-91 are enriched in basic residues; sequence RSKRLGKSKRKR. The short motif at 127–134 is the Nuclear localization signal 2 element; it reads EKRKRLPN. Cys-227, Cys-230, Cys-241, Cys-244, Cys-250, Cys-253, Cys-269, and Cys-272 together coordinate Zn(2+). The segment at 227–273 adopts an RING-type; degenerate zinc-finger fold; it reads CHWCGTRGFGDLISCLSCEREFFCIDCIEKRNKGSKEEVEKKCPVCR. Residues 330–339 show a composition bias toward basic and acidic residues; sequence ENDAEKKEGN. Disordered stretches follow at residues 330–359 and 701–736; these read ENDA…QPCS and RSKN…SQHC. A JmjC domain is found at 601-881; the sequence is FPNHYAEILN…ESIKRVKELN (281 aa).

It belongs to the JARID1 histone demethylase family. As to quaternary structure, interacts with the FBH transcription factors FBH1, FBH2, FBH3 and FBH4. It depends on Fe(2+) as a cofactor. Expressed in inflorescences, flowers, roots, siliques, leaves and stems, especially in the vasculature (mainly phloem), with highest levels in floral organs. Present at high levels in flowers, shoot apex and young seeds, but observed at low levels in dry seeds, root apex and anthers.

The protein localises to the nucleus. May function as histone H3 lysine demethylase and be involved in regulation of gene expression. Regulates flowering time by promoting CONSTANS (CO) and CONSTANS-LIKE genes (e.g. COL2 and COL5) expression via interaction with FBH transcription factors (FBH1, FBH2, FBH3 and FBH4) at their loci to remove H3K9me2 repressive histone marks. Also modulates the expression of several developmental genes such as MYB30, TFS1, AGL6 and RVE2. The sequence is that of Lysine-specific demethylase JMJ28 from Arabidopsis thaliana (Mouse-ear cress).